A 322-amino-acid chain; its full sequence is Probable heme-iron transport system permease protein IsdF (322 aa).

The next 9 membrane-spanning stretches (helical) occupy residues 9-29, 61-81, 89-109, 114-134, 143-163, 179-199, 233-253, 267-287, and 294-314; these read LLFL…FVTG, ILIA…LQAA, ANII…MLFI, FYLP…IILL, VSMI…LEIL, IWSD…LTLL, VFLA…GIIV, VLIP…DLLG, and LEIP…IYLI.

The protein belongs to the binding-protein-dependent transport system permease family. FecCD subfamily.

Its subcellular location is the cell membrane. Functionally, part of the binding-protein-dependent transport system for heme-iron. Responsible for the translocation of the substrate across the membrane. This Staphylococcus aureus (strain Mu3 / ATCC 700698) protein is Probable heme-iron transport system permease protein IsdF (isdF).